The following is a 348-amino-acid chain: Pyruvate dehydrogenase E1 component subunit alpha (348 aa).

The disordered stretch occupies residues 1–21; it reads MAPRKSASVSSRKTAAKPAKK.

In terms of assembly, heterodimer of an alpha and a beta chain. Thiamine diphosphate is required as a cofactor.

It catalyses the reaction N(6)-[(R)-lipoyl]-L-lysyl-[protein] + pyruvate + H(+) = N(6)-[(R)-S(8)-acetyldihydrolipoyl]-L-lysyl-[protein] + CO2. In terms of biological role, the pyruvate dehydrogenase complex catalyzes the overall conversion of pyruvate to acetyl-CoA and CO(2). It contains multiple copies of three enzymatic components: pyruvate dehydrogenase (E1), dihydrolipoamide acetyltransferase (E2) and lipoamide dehydrogenase (E3). This Rhizobium meliloti (strain 1021) (Ensifer meliloti) protein is Pyruvate dehydrogenase E1 component subunit alpha (pdhA).